The sequence spans 209 residues: Orotate phosphoribosyltransferase (209 aa).

5-phospho-alpha-D-ribose 1-diphosphate contacts are provided by residues Arg96, Lys100, His102, and 122–130 (EDLISTGGS). Orotate is bound at residue Ser126.

It belongs to the purine/pyrimidine phosphoribosyltransferase family. PyrE subfamily. As to quaternary structure, homodimer. The cofactor is Mg(2+).

The enzyme catalyses orotidine 5'-phosphate + diphosphate = orotate + 5-phospho-alpha-D-ribose 1-diphosphate. Its pathway is pyrimidine metabolism; UMP biosynthesis via de novo pathway; UMP from orotate: step 1/2. Catalyzes the transfer of a ribosyl phosphate group from 5-phosphoribose 1-diphosphate to orotate, leading to the formation of orotidine monophosphate (OMP). This Streptococcus agalactiae serotype III (strain NEM316) protein is Orotate phosphoribosyltransferase.